The chain runs to 244 residues: Futalosine hydrolase (244 aa).

It belongs to the PNP/UDP phosphorylase family. Futalosine hydrolase subfamily.

The enzyme catalyses futalosine + H2O = dehypoxanthine futalosine + hypoxanthine. It participates in quinol/quinone metabolism; menaquinone biosynthesis. Functionally, catalyzes the hydrolysis of futalosine (FL) to dehypoxanthine futalosine (DHFL) and hypoxanthine, a step in the biosynthesis of menaquinone (MK, vitamin K2). Cannot directly use aminodeoxyfutalosine (AFL) as a substrate. The protein is Futalosine hydrolase of Acidothermus cellulolyticus (strain ATCC 43068 / DSM 8971 / 11B).